Reading from the N-terminus, the 658-residue chain is UvrABC system protein B (658 aa).

The region spanning 25-416 is the Helicase ATP-binding domain; it reads KSLKNNNHYQ…QKNVAEQIIR (392 aa). 38–45 is an ATP binding site; that stretch reads GVTGSGKT. The Beta-hairpin motif lies at 91–114; sequence HFDYYQPESYIPRRDLFIEKDSSI. Residues 433–607 form the Helicase C-terminal domain; it reads QVQDLFDEIK…ELKLRDDEIK (175 aa). Residues 623–658 enclose the UVR domain; the sequence is EKIIKELDKKMRERAKNLDFEEAMRLRDEIAQLRTL.

This sequence belongs to the UvrB family. Forms a heterotetramer with UvrA during the search for lesions. Interacts with UvrC in an incision complex.

Its subcellular location is the cytoplasm. The UvrABC repair system catalyzes the recognition and processing of DNA lesions. A damage recognition complex composed of 2 UvrA and 2 UvrB subunits scans DNA for abnormalities. Upon binding of the UvrA(2)B(2) complex to a putative damaged site, the DNA wraps around one UvrB monomer. DNA wrap is dependent on ATP binding by UvrB and probably causes local melting of the DNA helix, facilitating insertion of UvrB beta-hairpin between the DNA strands. Then UvrB probes one DNA strand for the presence of a lesion. If a lesion is found the UvrA subunits dissociate and the UvrB-DNA preincision complex is formed. This complex is subsequently bound by UvrC and the second UvrB is released. If no lesion is found, the DNA wraps around the other UvrB subunit that will check the other stand for damage. This chain is UvrABC system protein B, found in Helicobacter pylori (strain J99 / ATCC 700824) (Campylobacter pylori J99).